The sequence spans 145 residues: Lipoprotein signal peptidase (145 aa).

Helical transmembrane passes span 1-21, 57-77, and 79-99; these read MVYI…LLVM, YLFI…YYKT, and GSGM…GNLI. Active-site residues include Asp-109 and Asp-123. The helical transmembrane segment at 115-135 threads the bilayer; the sequence is IWPVFNLADSSVVIGAALLIL.

Belongs to the peptidase A8 family.

It is found in the cell inner membrane. It catalyses the reaction Release of signal peptides from bacterial membrane prolipoproteins. Hydrolyzes -Xaa-Yaa-Zaa-|-(S,diacylglyceryl)Cys-, in which Xaa is hydrophobic (preferably Leu), and Yaa (Ala or Ser) and Zaa (Gly or Ala) have small, neutral side chains.. The protein operates within protein modification; lipoprotein biosynthesis (signal peptide cleavage). This protein specifically catalyzes the removal of signal peptides from prolipoproteins. The chain is Lipoprotein signal peptidase from Halothermothrix orenii (strain H 168 / OCM 544 / DSM 9562).